The primary structure comprises 303 residues: MQYKKTLVASALAATTLAAYAPSEPWSTLTPTATYSGGVTDYASTFGIAVQPISTTSSASSAATTASSKAKRAASQIGDGQVQAATTTASVSTKSSAAAVSQIGDGQIQATTKTTAAASLKLVMVKIQATTKTTAAAVSQIGDGQVQATTKTTAAAVSQITDGQVQATTKTTQAASQVSDGQVQATSATSASAAATSTDPVDAVSCKTSGTLEMNLKGGILTDGKGRIGSIVANRQFQFDGPPPQAGAIYAAGWSITPDGNLAIGDNDVFYQCLSGTFYNLYDEHIGSQCTPVHLEAIDLIDC.

Residues 1–18 (MQYKKTLVASALAATTLA) form the signal peptide. A propeptide spanning residues 19–72 (AYAPSEPWSTLTPTATYSGGVTDYASTFGIAVQPISTTSSASSAATTASSKAKR) is cleaved from the precursor. PIR1/2/3 repeat units lie at residues 71–89 (KRAA…TTTA) and 97–113 (AAAV…ATTK). A PIR1/2/3 3; degenerate repeat occupies 114-134 (TTAAASLKLVMVKIQATTKTT). PIR1/2/3 repeat units lie at residues 135-153 (AAAV…TKTT), 154-171 (AAAV…TTKT), and 172-190 (TQAA…SATS).

Belongs to the PIR protein family. Covalently linked to beta-1,3-glucan of the inner cell wall layer via an alkali-sensitive ester linkage between the gamma-carboxyl group of glutamic acids, arising from specific glutamines within the PIR1/2/3 repeats, and hydroxyl groups of glucoses of beta-1,3-glucan chains. Post-translationally, the propeptide is cleaved off in the late Golgi. While both peptides are secreted, only a fraction of the mature glycoprotein is incorporated into the cell wall. In terms of processing, O-glycosylated. Extensively O-mannosylated.

The protein resides in the secreted. Its subcellular location is the cell wall. Component of the outer cell wall layer. Required for stability of the cell wall and for optimal growth. Required for resistance against several antifungal and cell wall-perturbing agents and for tolerance to heat shock. This is Cell wall mannoprotein HSP150 (HSP150) from Saccharomyces cerevisiae (strain AWRI1631) (Baker's yeast).